The primary structure comprises 486 residues: Small ribosomal subunit protein uS4m (486 aa).

One can recognise an S4 RNA-binding domain in the interval 103–172; it reads KRLDFALFRA…AKKPSFQEAL (70 aa).

Belongs to the universal ribosomal protein uS4 family. Component of the mitochondrial small ribosomal subunit (mt-SSU). Mature yeast 74S mitochondrial ribosomes consist of a small (37S) and a large (54S) subunit. The 37S small subunit contains a 15S ribosomal RNA (15S mt-rRNA) and 34 different proteins. The 54S large subunit contains a 21S rRNA (21S mt-rRNA) and 46 different proteins. uS3m, uS4m and uS5m form the narrow entry site of the mRNA channel.

It localises to the mitochondrion. Its function is as follows. Component of the mitochondrial ribosome (mitoribosome), a dedicated translation machinery responsible for the synthesis of mitochondrial genome-encoded proteins, including at least some of the essential transmembrane subunits of the mitochondrial respiratory chain. The mitoribosomes are attached to the mitochondrial inner membrane and translation products are cotranslationally integrated into the membrane. In Saccharomyces cerevisiae (strain ATCC 204508 / S288c) (Baker's yeast), this protein is Small ribosomal subunit protein uS4m (NAM9).